The sequence spans 76 residues: MSSGALLPKPQMRGLLAKRLRVHIAGAFIVALGVAAAYKFGVAEPRKKAYAEFYRNYDSMKDFEEMRKAGIFQSAK.

At 4–22 the chain is on the mitochondrial matrix side; that stretch reads GALLPKPQMRGLLAKRLRV. A helical transmembrane segment spans residues 23–44; sequence HIAGAFIVALGVAAAYKFGVAE. Residues 45–76 lie on the Mitochondrial intermembrane side of the membrane; the sequence is PRKKAYAEFYRNYDSMKDFEEMRKAGIFQSAK.

The protein belongs to the cytochrome c oxidase subunit 6c family. As to quaternary structure, component of the cytochrome c oxidase (complex IV, CIV), a multisubunit enzyme composed of 14 subunits. The complex is composed of a catalytic core of 3 subunits MT-CO1, MT-CO2 and MT-CO3, encoded in the mitochondrial DNA, and 11 supernumerary subunits COX4I, COX5A, COX5B, COX6A, COX6B, COX6C, COX7A, COX7B, COX7C, COX8 and NDUFA4, which are encoded in the nuclear genome. The complex exists as a monomer or a dimer and forms supercomplexes (SCs) in the inner mitochondrial membrane with NADH-ubiquinone oxidoreductase (complex I, CI) and ubiquinol-cytochrome c oxidoreductase (cytochrome b-c1 complex, complex III, CIII), resulting in different assemblies (supercomplex SCI(1)III(2)IV(1) and megacomplex MCI(2)III(2)IV(2)). Acetylation of Lys-61 is observed in liver mitochondria from fasted mice but not from fed mice.

The protein localises to the mitochondrion inner membrane. It participates in energy metabolism; oxidative phosphorylation. Functionally, component of the cytochrome c oxidase, the last enzyme in the mitochondrial electron transport chain which drives oxidative phosphorylation. The respiratory chain contains 3 multisubunit complexes succinate dehydrogenase (complex II, CII), ubiquinol-cytochrome c oxidoreductase (cytochrome b-c1 complex, complex III, CIII) and cytochrome c oxidase (complex IV, CIV), that cooperate to transfer electrons derived from NADH and succinate to molecular oxygen, creating an electrochemical gradient over the inner membrane that drives transmembrane transport and the ATP synthase. Cytochrome c oxidase is the component of the respiratory chain that catalyzes the reduction of oxygen to water. Electrons originating from reduced cytochrome c in the intermembrane space (IMS) are transferred via the dinuclear copper A center (CU(A)) of subunit 2 and heme A of subunit 1 to the active site in subunit 1, a binuclear center (BNC) formed by heme A3 and copper B (CU(B)). The BNC reduces molecular oxygen to 2 water molecules using 4 electrons from cytochrome c in the IMS and 4 protons from the mitochondrial matrix. The polypeptide is Cytochrome c oxidase subunit 6C (Cox6c) (Mus musculus (Mouse)).